A 245-amino-acid polypeptide reads, in one-letter code: Malonyl-[acyl-carrier protein] O-methyltransferase (245 aa).

Belongs to the methyltransferase superfamily.

The enzyme catalyses malonyl-[ACP] + S-adenosyl-L-methionine = malonyl-[ACP] methyl ester + S-adenosyl-L-homocysteine. It participates in cofactor biosynthesis; biotin biosynthesis. Converts the free carboxyl group of a malonyl-thioester to its methyl ester by transfer of a methyl group from S-adenosyl-L-methionine (SAM). It allows to synthesize pimeloyl-ACP via the fatty acid synthetic pathway. This is Malonyl-[acyl-carrier protein] O-methyltransferase from Calditerrivibrio nitroreducens (strain DSM 19672 / NBRC 101217 / Yu37-1).